Consider the following 218-residue polypeptide: Thiopurine S-methyltransferase (218 aa).

The S-adenosyl-L-methionine site is built by Trp-10, Leu-45, Glu-66, and Arg-123.

Belongs to the class I-like SAM-binding methyltransferase superfamily. TPMT family.

The protein localises to the cytoplasm. It carries out the reaction S-adenosyl-L-methionine + a thiopurine = S-adenosyl-L-homocysteine + a thiopurine S-methylether.. Involved in the biological cycling of tellurium and selenium. Tellurium resistance (Ter) mechanism. The chain is Thiopurine S-methyltransferase from Pseudomonas syringae pv. pisi.